The following is a 618-amino-acid chain: Putative ATP-dependent DNA helicase Q1 (618 aa).

The 176-residue stretch at 95 to 270 (INAVMSKEDA…KKMLGIPVAI (176 aa)) folds into the Helicase ATP-binding domain. 108 to 115 (LSTGGGKS) provides a ligand contact to ATP. The DEVH box signature appears at 214–217 (DEVH). The 149-residue stretch at 295-443 (CVEKIVRTIK…NLYNMVRYAS (149 aa)) folds into the Helicase C-terminal domain. The Zn(2+) site is built by Cys-448, Cys-466, Cys-470, and Cys-473. Positions 586-618 (KGRAEENNRKRKAAVTSSDEEVDVGDDDDVITL) are disordered. The segment covering 603–618 (SDEEVDVGDDDDVITL) has biased composition (acidic residues).

It belongs to the helicase family. RecQ subfamily. It depends on Zn(2+) as a cofactor.

It is found in the nucleus. It catalyses the reaction Couples ATP hydrolysis with the unwinding of duplex DNA by translocating in the 3'-5' direction.. It carries out the reaction ATP + H2O = ADP + phosphate + H(+). Its function is as follows. DNA helicase that may play a role in the repair of DNA that is damaged by ultraviolet light or other mutagens. Exhibits a magnesium-dependent ATP-dependent DNA-helicase activity that unwinds single- and double-stranded DNA in a 3'-5' direction. This Caenorhabditis briggsae protein is Putative ATP-dependent DNA helicase Q1.